Here is a 25-residue protein sequence, read N- to C-terminus: Putative cytochrome c4 (25 aa).

Residues 1–25 (QEDIEAGKQKSATCTACHGQEGNST) are disordered. Residues C14 and C17 each coordinate heme.

In terms of processing, binds 2 heme groups per subunit.

The protein localises to the periplasm. Diheme, high potential cytochrome c believed to be an intermediate electron donor to terminal oxidation systems. The protein is Putative cytochrome c4 of Aliivibrio fischeri (Vibrio fischeri).